The following is a 44-amino-acid chain: Thymosin beta-4 (44 aa).

Basic and acidic residues predominate over residues 1-25; it reads MADKPDMAEIEKFDKSKLKKTETQE. The disordered stretch occupies residues 1–44; sequence MADKPDMAEIEKFDKSKLKKTETQEKNPLPSKETIEQEKQAGES. An N-acetylalanine modification is found at Ala2. Lys4 carries the post-translational modification N6-acetyllysine. Lys12 carries the N6-acetyllysine; alternate modification. Lys12 participates in a covalent cross-link: Glycyl lysine isopeptide (Lys-Gly) (interchain with G-Cter in SUMO2); alternate. Thr23 bears the Phosphothreonine mark. Lys26 carries the N6-acetyllysine modification. Ser31 is modified (phosphoserine). Lys32 is subject to N6-acetyllysine. Residues 33–44 show a composition bias toward basic and acidic residues; it reads ETIEQEKQAGES. Thr34 carries the phosphothreonine modification. At Lys39 the chain carries N6-acetyllysine.

This sequence belongs to the thymosin beta family. As to expression, originally found in thymus but it is widely distributed in many tissues.

The protein localises to the cytoplasm. It is found in the cytoskeleton. In terms of biological role, plays an important role in the organization of the cytoskeleton. Binds to and sequesters actin monomers (G actin) and therefore inhibits actin polymerization. Its function is as follows. Seraspenide inhibits the entry of hematopoietic pluripotent stem cells into the S-phase. The protein is Thymosin beta-4 (TMSB4) of Oryctolagus cuniculus (Rabbit).